A 260-amino-acid chain; its full sequence is Ribose-5-phosphate isomerase A (260 aa).

Residues 33–36, 89–92, and 102–105 each bind substrate; these read TGST, DGAD, and KGGG. The Proton acceptor role is filled by Glu-111. Residue Lys-129 coordinates substrate.

Belongs to the ribose 5-phosphate isomerase family. As to quaternary structure, homodimer.

It carries out the reaction aldehydo-D-ribose 5-phosphate = D-ribulose 5-phosphate. The protein operates within carbohydrate degradation; pentose phosphate pathway; D-ribose 5-phosphate from D-ribulose 5-phosphate (non-oxidative stage): step 1/1. Functionally, catalyzes the reversible conversion of ribose-5-phosphate to ribulose 5-phosphate. The polypeptide is Ribose-5-phosphate isomerase A (Dinoroseobacter shibae (strain DSM 16493 / NCIMB 14021 / DFL 12)).